The chain runs to 785 residues: (+)-copalyl diphosphate synthase 3, chloroplastic (785 aa).

Lysine 238 contributes to the substrate binding site. Residues aspartate 371 and aspartate 373 each coordinate Mg(2+). The DXDD motif signature appears at 371-374 (DIDD). A substrate-binding site is contributed by lysine 457.

Belongs to the terpene synthase family. Requires Mg(2+) as cofactor. As to expression, present in both leaves and flowers, with higher levels in leaves.

It localises to the plastid. The protein resides in the chloroplast. It catalyses the reaction (2E,6E,10E)-geranylgeranyl diphosphate = (+)-copalyl diphosphate. Its pathway is secondary metabolite biosynthesis; terpenoid biosynthesis. Functionally, involved in the biosynthesis of labdane-type diterpenoid including marrubiin and other labdane-related furanoid diterpenoids with potential applications as anti-diabetics, analgesics or vasorelaxants. Terpene synthase that produces (+)-copalyl diphosphate ((+)-CPP) from geranylgeranyl diphosphate (GGPP). This is (+)-copalyl diphosphate synthase 3, chloroplastic from Marrubium vulgare (White horehound).